Consider the following 461-residue polypeptide: Deoxyguanosinetriphosphate triphosphohydrolase-like protein (461 aa).

A disordered region spans residues 22–41 (ERFLPDPPREKDNRPPFRRD). Residues 24-41 (FLPDPPREKDNRPPFRRD) are compositionally biased toward basic and acidic residues. Residues 72–285 (RLTHSLEVAQ…MELADDIAYG (214 aa)) form the HD domain.

It belongs to the dGTPase family. Type 2 subfamily.

This Haemophilus influenzae (strain PittGG) protein is Deoxyguanosinetriphosphate triphosphohydrolase-like protein.